The chain runs to 308 residues: Taste receptor type 2 member 41 (308 aa).

Residues 1-6 are Extracellular-facing; it reads MLSTVS. The helical transmembrane segment at 7–27 threads the bilayer; that stretch reads VFFMSIFVLLCFLGILANGFI. Topologically, residues 28–60 are cytoplasmic; it reads VLMLSREWLWRGRLLPSDMILLSLGTSRFCQQC. The helical transmembrane segment at 61–81 threads the bilayer; it reads VGLVNSFYYSLHLVEYSRSLA. Residues 82–90 lie on the Extracellular side of the membrane; that stretch reads RQLISLHMD. A helical membrane pass occupies residues 91–111; sequence FLNSATFWFGTWLSVLFCIKI. The Cytoplasmic portion of the chain corresponds to 112-128; sequence ANFSHPAFLWLKWRFPA. A helical membrane pass occupies residues 129–149; that stretch reads LVPWLLLGSILVSFIVTLMFF. The Extracellular portion of the chain corresponds to 150–184; the sequence is WGNHTVYQAFLRRKFSGNTTFKEWNRRLEIDYFMP. Residues Asn-152 and Asn-167 are each glycosylated (N-linked (GlcNAc...) asparagine). Residues 185-205 traverse the membrane as a helical segment; that stretch reads LKLVTTSIPCSLFLVSILLLI. Topologically, residues 206 to 239 are cytoplasmic; it reads NSLRRHSQRMQHNAHSLQDPNTQAHSRALKSLIS. A helical membrane pass occupies residues 240–260; it reads FLVLYALSYVSMVIDATVVIS. Residues 261–264 lie on the Extracellular side of the membrane; that stretch reads SDNV. The chain crosses the membrane as a helical span at residues 265–285; sequence WYWPWQIILYLCMSVHPFILI. At 286–308 the chain is on the cytoplasmic side; that stretch reads TNNLKFRGTFRQLLLLARGFWVT.

It belongs to the G-protein coupled receptor T2R family. Expressed in subsets of taste receptor cells of the tongue and palate epithelium and exclusively in gustducin-positive cells. Expressed in 15% taste bud cells in circumvallate and foliate papillae but only in 2% in fungiform papillae. Expressed in the duodenum, antrum and fundus (part of the stomach).

Its subcellular location is the membrane. Receptor that may play a role in the perception of bitterness and is gustducin-linked. May play a role in sensing the chemical composition of the gastrointestinal content. The activity of this receptor may stimulate alpha gustducin, mediate PLC-beta-2 activation and lead to the gating of TRPM5. This Rattus norvegicus (Rat) protein is Taste receptor type 2 member 41 (Tas2r41).